A 292-amino-acid polypeptide reads, in one-letter code: MNNHFKCIGIVGHPRHPTALTTHEMLYRWLCAQGYEVIVEQQIAHELQLKNVPTGTLAEIGQQADLAVVVGGDGNMLGAARTLARYNINVIGINRGNLGFLTDLDPDNALQQLSDVLEGRYISEKRFLLEAQVCQQDRQKRISTAINEVVLHPGKVAHMIEFEVYIDETFAFSQRSDGLIISTPTGSTAYSLSAGGPILTPSLDAITLVPMFPHTLSARPLVINSSSTIRLRFSHRRSDLEISCDSQIALPIQEGEDVLIRRCDYHLNLIHPKDYSYFNTLSTKLGWSKKLF.

The Proton acceptor role is filled by Asp73. Residues 73–74 (DG), 147–148 (NE), His158, Arg175, Asp177, 188–193 (TAYSLS), and Gln247 contribute to the NAD(+) site.

The protein belongs to the NAD kinase family. Requires a divalent metal cation as cofactor.

The protein resides in the cytoplasm. It carries out the reaction NAD(+) + ATP = ADP + NADP(+) + H(+). In terms of biological role, involved in the regulation of the intracellular balance of NAD and NADP, and is a key enzyme in the biosynthesis of NADP. Catalyzes specifically the phosphorylation on 2'-hydroxyl of the adenosine moiety of NAD to yield NADP. The polypeptide is NAD kinase (Salmonella dublin (strain CT_02021853)).